The sequence spans 255 residues: Thiazole synthase (255 aa).

Lys95 serves as the catalytic Schiff-base intermediate with DXP. Residues Gly156, 182–183 (AG), and 204–205 (NT) each bind 1-deoxy-D-xylulose 5-phosphate.

This sequence belongs to the ThiG family. In terms of assembly, homotetramer. Forms heterodimers with either ThiH or ThiS.

It is found in the cytoplasm. It catalyses the reaction [ThiS sulfur-carrier protein]-C-terminal-Gly-aminoethanethioate + 2-iminoacetate + 1-deoxy-D-xylulose 5-phosphate = [ThiS sulfur-carrier protein]-C-terminal Gly-Gly + 2-[(2R,5Z)-2-carboxy-4-methylthiazol-5(2H)-ylidene]ethyl phosphate + 2 H2O + H(+). It functions in the pathway cofactor biosynthesis; thiamine diphosphate biosynthesis. Its function is as follows. Catalyzes the rearrangement of 1-deoxy-D-xylulose 5-phosphate (DXP) to produce the thiazole phosphate moiety of thiamine. Sulfur is provided by the thiocarboxylate moiety of the carrier protein ThiS. In vitro, sulfur can be provided by H(2)S. This Vibrio parahaemolyticus serotype O3:K6 (strain RIMD 2210633) protein is Thiazole synthase.